We begin with the raw amino-acid sequence, 236 residues long: Ribosome-inactivating protein saporin-3 (236 aa).

The active site involves E148.

This sequence belongs to the ribosome-inactivating protein family. Type 1 RIP subfamily.

The enzyme catalyses Endohydrolysis of the N-glycosidic bond at one specific adenosine on the 28S rRNA.. Functionally, ribosome-inactivating protein of type 1, inhibits protein synthesis in animal cells. Useful as immunotoxin for pharmacological applications. The sequence is that of Ribosome-inactivating protein saporin-3 (SAP3) from Saponaria officinalis (Common soapwort).